The primary structure comprises 196 residues: Protein GrpE (196 aa).

The disordered stretch occupies residues 1 to 41; sequence MSSKEQKTPEGQAPEEIITEQHDDVEAVEPEVSAEQVDPRD.

The protein belongs to the GrpE family. Homodimer.

The protein resides in the cytoplasm. Its function is as follows. Participates actively in the response to hyperosmotic and heat shock by preventing the aggregation of stress-denatured proteins, in association with DnaK and GrpE. It is the nucleotide exchange factor for DnaK and may function as a thermosensor. Unfolded proteins bind initially to DnaJ; upon interaction with the DnaJ-bound protein, DnaK hydrolyzes its bound ATP, resulting in the formation of a stable complex. GrpE releases ADP from DnaK; ATP binding to DnaK triggers the release of the substrate protein, thus completing the reaction cycle. Several rounds of ATP-dependent interactions between DnaJ, DnaK and GrpE are required for fully efficient folding. The polypeptide is Protein GrpE (Klebsiella pneumoniae (strain 342)).